Consider the following 121-residue polypeptide: UPF0344 protein BCA_1194 (121 aa).

4 helical membrane-spanning segments follow: residues 6–26 (ITAW…YSAG), 38–58 (LMYI…MKTA), 65–85 (WYGL…MVLV), and 92–112 (ATGA…YLGL).

Belongs to the UPF0344 family.

It is found in the cell membrane. The protein is UPF0344 protein BCA_1194 of Bacillus cereus (strain 03BB102).